The following is a 141-amino-acid chain: Cystatin (141 aa).

The N-terminal stretch at 1–26 (MVHSQLPVAAPLRLLCALLLLPSATM) is a signal peptide. Positions 29–129 (GGLSPRSVTD…CHFQVWSRPW (101 aa)) constitute a Cystatin domain. Residues 73 to 77 (QVVAG) carry the Secondary area of contact motif. Disulfide bonds link Cys-91–Cys-107 and Cys-120–Cys-140.

The protein belongs to the cystatin family. As to expression, expressed at a low level by the venom gland (at protein level).

It localises to the secreted. Its function is as follows. Inhibits various C1 cysteine proteases including cathepsin L, papain and cathepsin B. This protein has no toxic activity and its function in the venom is unknown. It may play a role as a housekeeping or regulatory protein. This Pseudonaja textilis (Eastern brown snake) protein is Cystatin.